The chain runs to 850 residues: Protein STB2 (850 aa).

Ser-594 and Ser-625 each carry phosphoserine.

To yeast STB6. Interacts with SIN3.

This is Protein STB2 (STB2) from Saccharomyces cerevisiae (strain ATCC 204508 / S288c) (Baker's yeast).